Consider the following 203-residue polypeptide: Probable chemoreceptor glutamine deamidase CheD (203 aa).

Belongs to the CheD family.

The enzyme catalyses L-glutaminyl-[protein] + H2O = L-glutamyl-[protein] + NH4(+). Its function is as follows. Probably deamidates glutamine residues to glutamate on methyl-accepting chemotaxis receptors (MCPs), playing an important role in chemotaxis. In Janthinobacterium sp. (strain Marseille) (Minibacterium massiliensis), this protein is Probable chemoreceptor glutamine deamidase CheD.